The chain runs to 417 residues: Ribonuclease T2-like (417 aa).

The N-terminal stretch at 1–22 (MSSISGFLGAIPGAQQILQTMA) is a signal peptide. Intrachain disulfides connect Cys45/Cys63, Cys52/Cys99, Cys62/Cys165, Cys107/Cys157, and Cys229/Cys264. His92 is an active-site residue. The N-linked (GlcNAc...) asparagine glycan is linked to Asn115. Active-site residues include Glu150 and His154. The tract at residues 274–296 (KTPNKDPGHGHEPTKTRHPHGPT) is disordered. The segment covering 276 to 288 (PNKDPGHGHEPTK) has biased composition (basic and acidic residues). N-linked (GlcNAc...) asparagine glycosylation occurs at Asn383.

This sequence belongs to the RNase T2 family.

It localises to the vacuole lumen. Its subcellular location is the cytoplasm. The enzyme catalyses a ribonucleotidyl-ribonucleotide-RNA + H2O = a 3'-end 3'-phospho-ribonucleotide-RNA + a 5'-end dephospho-ribonucleoside-RNA + H(+). Its function is as follows. Rnase which modulates cell survival under stress conditions. Released from the vacuole to the cytoplasm during stress to promote tRNA and rRNA cleavage and to activate separately a downstream pathway that promotes cell death. Involved in cell size, vacuolar morphology and growth at high temperatures and high salt concentration. This chain is Ribonuclease T2-like (rny1), found in Emericella nidulans (strain FGSC A4 / ATCC 38163 / CBS 112.46 / NRRL 194 / M139) (Aspergillus nidulans).